The chain runs to 443 residues: Ribosomal protein uS12 methylthiotransferase RimO (443 aa).

An MTTase N-terminal domain is found at 1 to 114 (MGFVSLGCPK…VMQAVHTHLP (114 aa)). [4Fe-4S] cluster contacts are provided by Cys8, Cys44, Cys73, Cys145, Cys149, and Cys152. One can recognise a Radical SAM core domain in the interval 131-372 (LTPKHYAYLK…MEVAEEVSAR (242 aa)). Positions 375–443 (QRKVGQTLRV…ADGHDLWGAV (69 aa)) constitute a TRAM domain.

Belongs to the methylthiotransferase family. RimO subfamily. The cofactor is [4Fe-4S] cluster.

It localises to the cytoplasm. The catalysed reaction is L-aspartate(89)-[ribosomal protein uS12]-hydrogen + (sulfur carrier)-SH + AH2 + 2 S-adenosyl-L-methionine = 3-methylsulfanyl-L-aspartate(89)-[ribosomal protein uS12]-hydrogen + (sulfur carrier)-H + 5'-deoxyadenosine + L-methionine + A + S-adenosyl-L-homocysteine + 2 H(+). In terms of biological role, catalyzes the methylthiolation of an aspartic acid residue of ribosomal protein uS12. This chain is Ribosomal protein uS12 methylthiotransferase RimO, found in Cupriavidus necator (strain ATCC 17699 / DSM 428 / KCTC 22496 / NCIMB 10442 / H16 / Stanier 337) (Ralstonia eutropha).